The sequence spans 314 residues: Synaptophysin (314 aa).

Over 1–25 (MLLLADMDVVNQLVAGGQFRVVKEP) the chain is Cytoplasmic. The MARVEL domain occupies 21–228 (VVKEPLGFVK…NLWFVFKETG (208 aa)). Residues 26–49 (LGFVKVLQWVFAIFAFATCGSYTG) traverse the membrane as a helical segment. Residues 50-107 (ELRLSVECANKTESALNIEVEFEYPFRLHQVYFDAPSCVKGGTTKIFLVGDYSSSAEF) lie on the Vesicular side of the membrane. N-linked (GlcNAc...) asparagine glycosylation occurs at asparagine 59. Tyrosine 81 is subject to Phosphotyrosine. The chain crosses the membrane as a helical span at residues 108–131 (FVTVAVFAFLYSMGALATYIFLQN). Topologically, residues 132–138 (KYRENNK) are cytoplasmic. Residues 139–162 (GPMMDFLATAVFAFMWLVSSSAWA) traverse the membrane as a helical segment. Over 163 to 200 (KGLSDVKMATDPENIIKEMPMCRQTGNTCKELRDPVTS) the chain is Vesicular. The chain crosses the membrane as a helical span at residues 201 to 224 (GLNTSVVFGFLNLVLWVGNLWFVF). Residues 225-314 (KETGWAAPFM…GAPTSFSNQM (90 aa)) lie on the Cytoplasmic side of the membrane. The residue at position 227 (threonine 227) is a Phosphothreonine. Positions 239–314 (GAPEKQPAPG…GAPTSFSNQM (76 aa)) are disordered. Residues 254 to 264 (AGYGQGPGGYG) show a composition bias toward gly residues. A repeats, Gly-rich region spans residues 255–305 (GYGQGPGGYGPQDSYGPQGGYQPDYGQPASGGGGGYGPQGDYGQQGYGQQG). Residues 265 to 282 (PQDSYGPQGGYQPDYGQP) are compositionally biased toward low complexity. Tyrosine 279 and tyrosine 296 each carry phosphotyrosine. Gly residues predominate over residues 283–303 (ASGGGGGYGPQGDYGQQGYGQ).

Belongs to the synaptophysin/synaptobrevin family. In terms of assembly, homohexamer or homotetramer. Interacts with SRCIN1. Interacts with VAMP2; the interaction is inhibited by interaction of VAPM2 with SEPT8. In terms of processing, ubiquitinated; mediated by SIAH1 or SIAH2 and leading to its subsequent proteasomal degradation. Post-translationally, phosphorylated by SRC.

It is found in the cytoplasmic vesicle. It localises to the secretory vesicle. The protein resides in the synaptic vesicle membrane. The protein localises to the synapse. Its subcellular location is the synaptosome. In terms of biological role, possibly involved in structural functions as organizing other membrane components or in targeting the vesicles to the plasma membrane. Involved in the regulation of short-term and long-term synaptic plasticity. This chain is Synaptophysin (Syp), found in Mus musculus (Mouse).